The primary structure comprises 140 residues: L-fucose mutarotase (140 aa).

His22 serves as the catalytic Proton donor. Residues Asp30, Arg107, and Tyr129–Asn131 contribute to the substrate site.

This sequence belongs to the RbsD / FucU family. FucU mutarotase subfamily. In terms of assembly, homodecamer.

It is found in the cytoplasm. It catalyses the reaction alpha-L-fucose = beta-L-fucose. It functions in the pathway carbohydrate metabolism; L-fucose metabolism. Involved in the anomeric conversion of L-fucose. The polypeptide is L-fucose mutarotase (Salmonella paratyphi B (strain ATCC BAA-1250 / SPB7)).